Here is a 117-residue protein sequence, read N- to C-terminus: Hemerythrin subunit beta (117 aa).

Positions 24, 53, 57, 72, 76, 105, and 110 each coordinate Fe cation.

The protein belongs to the hemerythrin family. As to quaternary structure, octamer composed of two types of chains: alpha and beta.

Its function is as follows. Hemerythrin is a respiratory protein in blood cells of certain marine worms. The oxygen-binding site in each chain contains two iron atoms. This Lingula reevii (Inarticulated brachiopod) protein is Hemerythrin subunit beta.